A 449-amino-acid polypeptide reads, in one-letter code: Transport protein ComB (449 aa).

At 1 to 20 (MKPEFLESAEFYNRRYHNFS) the chain is on the cytoplasmic side. The chain crosses the membrane as a helical span at residues 21-41 (SSVIVPMALLLVFLLGFATVA). At 42 to 449 (EKEMSLSTRA…YYLDQFLNKE (408 aa)) the chain is on the extracellular side.

It belongs to the membrane fusion protein (MFP) (TC 8.A.1) family.

The protein resides in the cell membrane. Its function is as follows. Required for induction of competence. In Streptococcus pneumoniae (strain ATCC BAA-255 / R6), this protein is Transport protein ComB (comB).